The primary structure comprises 317 residues: uncharacterized protein (317 aa).

The next 6 membrane-spanning stretches (helical) occupy residues 14-34 (IPLL…ATVS), 72-92 (LIGF…YGAV), 119-139 (LLFG…LDIA), 196-216 (TLLN…FCKQ), 230-250 (LFLG…ADVL), and 291-307 (SNML…WYTY). Solcar repeat units lie at residues 18 to 103 (SNDL…LKQR), 113 to 217 (LENH…CKQK), and 224 to 313 (LTAF…VSKM).

This sequence belongs to the mitochondrial carrier (TC 2.A.29) family.

It localises to the mitochondrion inner membrane. This is an uncharacterized protein from Schizosaccharomyces pombe (strain 972 / ATCC 24843) (Fission yeast).